We begin with the raw amino-acid sequence, 82 residues long: Small ribosomal subunit protein bS16 (82 aa).

It belongs to the bacterial ribosomal protein bS16 family.

The sequence is that of Small ribosomal subunit protein bS16 from Alcanivorax borkumensis (strain ATCC 700651 / DSM 11573 / NCIMB 13689 / SK2).